A 150-amino-acid polypeptide reads, in one-letter code: Aspartate 1-decarboxylase (150 aa).

S24 serves as the catalytic Schiff-base intermediate with substrate; via pyruvic acid. S24 is modified (pyruvic acid (Ser)). Position 56 (T56) interacts with substrate. Y57 serves as the catalytic Proton donor. 72–74 (GAA) serves as a coordination point for substrate.

It belongs to the PanD family. Heterooctamer of four alpha and four beta subunits. It depends on pyruvate as a cofactor. In terms of processing, is synthesized initially as an inactive proenzyme, which is activated by self-cleavage at a specific serine bond to produce a beta-subunit with a hydroxyl group at its C-terminus and an alpha-subunit with a pyruvoyl group at its N-terminus.

It localises to the cytoplasm. It carries out the reaction L-aspartate + H(+) = beta-alanine + CO2. Its pathway is cofactor biosynthesis; (R)-pantothenate biosynthesis; beta-alanine from L-aspartate: step 1/1. Catalyzes the pyruvoyl-dependent decarboxylation of aspartate to produce beta-alanine. The chain is Aspartate 1-decarboxylase from Beijerinckia indica subsp. indica (strain ATCC 9039 / DSM 1715 / NCIMB 8712).